The primary structure comprises 401 residues: Putative hetero-Diels-Alderase asR5 (401 aa).

Residues 1–21 (MRRSFLISAALGLSMSTPALA) form the signal peptide. N71, N77, N240, and N334 each carry an N-linked (GlcNAc...) asparagine glycan.

The protein belongs to the eupF Diels-Alderase family.

Its pathway is secondary metabolite biosynthesis; terpenoid biosynthesis. Its function is as follows. Putative hetero-Diels-Alderase; part of the gene cluster that mediates the biosynthesis of xenovulene A, an unusual meroterpenoid that has potent inhibitory effects on the human gamma-aminobutyrate A (GABAA) benzodiazepine receptor. The first step of xenovulene A biosynthesis is the biosynthesis of 3-methylorcinaldehyde performed by the non-reducing polyketide synthase aspks1. The salicylate hydroxylase asL1 then catalyzes the oxidative dearomatization of 3-methylorcinaldehyde to yield a dearomatized hydroxycyclohexadione. The 2-oxoglutarate-dependent dioxygenase asL3 further catalyzes the oxidative ring expansion to provide the first tropolone metabolite. The cytochrome P450 monooxygenase asR2 allows the synthesis of tropolone hemiacetal. In parallel, a previously unrecognised class of terpene cyclase, asR6, produces alpha-humulene from farnesylpyrophosphate (FPP). The putative Diels-Alderase asR5 probably catalyzes the formation of the tropolone-humulene skeleton by linking humulene and the polyketide moiety. Oxidative-ring contractions catalyzed by asL4 and asL6 then processively remove carbon atoms from the polyketide to yield xenovulene A. This is Putative hetero-Diels-Alderase asR5 from Sarocladium schorii (Acremonium strictum (strain IMI 501407)).